The primary structure comprises 148 residues: NADPH-dependent 7-cyano-7-deazaguanine reductase (148 aa).

C50 serves as the catalytic Thioimide intermediate. D57 functions as the Proton donor in the catalytic mechanism. Residues 72–74 and 91–92 each bind substrate; these read VES and HE.

The protein belongs to the GTP cyclohydrolase I family. QueF type 1 subfamily.

The protein resides in the cytoplasm. It catalyses the reaction 7-aminomethyl-7-carbaguanine + 2 NADP(+) = 7-cyano-7-deazaguanine + 2 NADPH + 3 H(+). It participates in tRNA modification; tRNA-queuosine biosynthesis. Functionally, catalyzes the NADPH-dependent reduction of 7-cyano-7-deazaguanine (preQ0) to 7-aminomethyl-7-deazaguanine (preQ1). The protein is NADPH-dependent 7-cyano-7-deazaguanine reductase of Helicobacter pylori (strain HPAG1).